The chain runs to 274 residues: 3-methyl-2-oxobutanoate hydroxymethyltransferase (274 aa).

The Mg(2+) site is built by aspartate 49 and aspartate 88. 3-methyl-2-oxobutanoate is bound by residues 49–50 (DS), aspartate 88, and lysine 118. A Mg(2+)-binding site is contributed by glutamate 120. The active-site Proton acceptor is glutamate 187.

Belongs to the PanB family. Homodecamer; pentamer of dimers. Mg(2+) is required as a cofactor.

Its subcellular location is the cytoplasm. The catalysed reaction is 3-methyl-2-oxobutanoate + (6R)-5,10-methylene-5,6,7,8-tetrahydrofolate + H2O = 2-dehydropantoate + (6S)-5,6,7,8-tetrahydrofolate. Its pathway is cofactor biosynthesis; (R)-pantothenate biosynthesis; (R)-pantoate from 3-methyl-2-oxobutanoate: step 1/2. Catalyzes the reversible reaction in which hydroxymethyl group from 5,10-methylenetetrahydrofolate is transferred onto alpha-ketoisovalerate to form ketopantoate. The protein is 3-methyl-2-oxobutanoate hydroxymethyltransferase of Parvibaculum lavamentivorans (strain DS-1 / DSM 13023 / NCIMB 13966).